The primary structure comprises 131 residues: Global transcriptional regulator Spx 2 (131 aa).

The cysteines at positions 10 and 13 are disulfide-linked.

It belongs to the ArsC family. Spx subfamily. As to quaternary structure, interacts with the C-terminal domain of the alpha subunit of the RNAP.

Its subcellular location is the cytoplasm. Its function is as follows. Global transcriptional regulator that plays a key role in stress response and exerts either positive or negative regulation of genes. Acts by interacting with the C-terminal domain of the alpha subunit of the RNA polymerase (RNAP). This interaction can enhance binding of RNAP to the promoter region of target genes and stimulate their transcription, or block interaction of RNAP with activator. The sequence is that of Global transcriptional regulator Spx 2 from Bacillus anthracis.